Reading from the N-terminus, the 436-residue chain is Trigger factor (436 aa).

The 86-residue stretch at 163 to 248 (GDRVTLDFAG…VKEVAEGVLP (86 aa)) folds into the PPIase FKBP-type domain.

It belongs to the FKBP-type PPIase family. Tig subfamily.

It localises to the cytoplasm. It carries out the reaction [protein]-peptidylproline (omega=180) = [protein]-peptidylproline (omega=0). Functionally, involved in protein export. Acts as a chaperone by maintaining the newly synthesized protein in an open conformation. Functions as a peptidyl-prolyl cis-trans isomerase. The chain is Trigger factor from Bordetella petrii (strain ATCC BAA-461 / DSM 12804 / CCUG 43448).